The sequence spans 485 residues: NADH-quinone oxidoreductase subunit N (485 aa).

14 helical membrane passes run 8-28, 35-55, 71-91, 105-125, 127-147, 159-179, 203-223, 235-255, 271-291, 297-317, 326-346, 373-393, 408-430, and 455-475; these read LIAL…MLSI, FLNA…LWFV, GFAM…CTFA, FYLL…ANHL, SLFL…GYAF, YTIL…LVYA, LLAG…LVPF, PAPV…GVVM, VVLA…ALSQ, LLGY…IALQ, VGVY…VVSL, AAVM…LGFI, WWLV…RVAV, and IVVL…QPLI.

The protein belongs to the complex I subunit 2 family. As to quaternary structure, NDH-1 is composed of 13 different subunits. Subunits NuoA, H, J, K, L, M, N constitute the membrane sector of the complex.

The protein resides in the cell inner membrane. It catalyses the reaction a quinone + NADH + 5 H(+)(in) = a quinol + NAD(+) + 4 H(+)(out). Functionally, NDH-1 shuttles electrons from NADH, via FMN and iron-sulfur (Fe-S) centers, to quinones in the respiratory chain. The immediate electron acceptor for the enzyme in this species is believed to be ubiquinone. Couples the redox reaction to proton translocation (for every two electrons transferred, four hydrogen ions are translocated across the cytoplasmic membrane), and thus conserves the redox energy in a proton gradient. In Escherichia coli O81 (strain ED1a), this protein is NADH-quinone oxidoreductase subunit N.